Here is a 759-residue protein sequence, read N- to C-terminus: Protein YdeP (759 aa).

[4Fe-4S] cluster-binding residues include Cys49 and Cys52.

Belongs to the prokaryotic molybdopterin-containing oxidoreductase family. The cofactor is [4Fe-4S] cluster. Requires Mo-bis(molybdopterin guanine dinucleotide) as cofactor.

In terms of biological role, probably involved in acid resistance. This chain is Protein YdeP (ydeP), found in Escherichia coli (strain K12).